Consider the following 148-residue polypeptide: Large ribosomal subunit protein bL9 (148 aa).

This sequence belongs to the bacterial ribosomal protein bL9 family.

Its function is as follows. Binds to the 23S rRNA. The protein is Large ribosomal subunit protein bL9 of Parabacteroides distasonis (strain ATCC 8503 / DSM 20701 / CIP 104284 / JCM 5825 / NCTC 11152).